The following is a 314-amino-acid chain: Protein OPG185 (314 aa).

A signal peptide spans 1-16; sequence MARLPILLLLISLVYS. In terms of domain architecture, Ig-like V-type spans 17 to 121; that stretch reads TPSPQTSKKI…NDTDKVDYEE (105 aa). Over 17 to 278 the chain is Virion surface; that stretch reads TPSPQTSKKI…SNYKTKDFVE (262 aa). An intrachain disulfide couples Cys34 to Cys103. N-linked (GlcNAc...) asparagine; by host glycosylation is found at Asn37, Asn38, Asn69, Asn112, and Asn161. A disordered region spans residues 192-217; sequence NTVSTTSRESTTDETPEPITDKEEDH. The N-linked (GlcNAc...) asparagine; by host glycan is linked to Asn253. The chain crosses the membrane as a helical span at residues 279–302; the sequence is IFGITALIILSAVAIFCITYYICN. The Intravirion portion of the chain corresponds to 303–314; it reads KRSRKYKTENKV.

This sequence belongs to the orthopoxvirus OPG185 family. In terms of assembly, heterodimerizes with OPG040. The heterodimer OPG185-OPG040 interacts with components of the entry fusion complex OPG143 and OPG094. Heterodimer with C3/VPC protein; disulfide-linked. In terms of processing, glycosylated; contains phosphate and sulfate-substituted glycans. O-glycosylation is required for hemagglutination and hemadsorption activities of infected cell membranes.

It is found in the virion membrane. The protein localises to the host membrane. In terms of biological role, prevents cell to cell fusion by interacting with and directing the viral OPG040 protein on the host plasma membrane. The OPG185-OPG040 complex associates with components of the entry fusion complex (EFC) presumably to avoid superinfection and syncytium formation. Via its interaction with C3/VCP protein, protects the infected cell and probably also the extracellular enveloped virus from complement attack. The polypeptide is Protein OPG185 (OPG185) (Bos taurus (Bovine)).